A 284-amino-acid chain; its full sequence is D-tagatose-1,6-bisphosphate aldolase subunit GatY (284 aa).

Aspartate 82 serves as the catalytic Proton donor. Zn(2+) is bound by residues histidine 83 and histidine 180. Position 181 (glycine 181) interacts with dihydroxyacetone phosphate. Position 208 (histidine 208) interacts with Zn(2+). Dihydroxyacetone phosphate-binding positions include 209-211 (GAS) and 230-233 (NVAT).

The protein belongs to the class II fructose-bisphosphate aldolase family. TagBP aldolase GatY subfamily. Forms a complex with GatZ. Zn(2+) is required as a cofactor.

The enzyme catalyses D-tagatofuranose 1,6-bisphosphate = D-glyceraldehyde 3-phosphate + dihydroxyacetone phosphate. It functions in the pathway carbohydrate metabolism; D-tagatose 6-phosphate degradation; D-glyceraldehyde 3-phosphate and glycerone phosphate from D-tagatose 6-phosphate: step 2/2. Catalytic subunit of the tagatose-1,6-bisphosphate aldolase GatYZ, which catalyzes the reversible aldol condensation of dihydroxyacetone phosphate (DHAP or glycerone-phosphate) with glyceraldehyde 3-phosphate (G3P) to produce tagatose 1,6-bisphosphate (TBP). Requires GatZ subunit for full activity and stability. Is involved in the catabolism of galactitol. The sequence is that of D-tagatose-1,6-bisphosphate aldolase subunit GatY from Escherichia coli (strain SMS-3-5 / SECEC).